The following is a 662-amino-acid chain: uncharacterized protein (662 aa).

The next 16 helical transmembrane spans lie at S10–V30, P46–I66, A68–G88, G101–P121, L167–T187, I193–A213, S217–V237, P263–L283, I285–A305, M312–S332, E342–I362, K373–P393, G394–W414, A432–M452, V460–I480, and L485–G505.

It is found in the cell membrane. This is an uncharacterized protein from Sinorhizobium fredii (strain NBRC 101917 / NGR234).